The chain runs to 394 residues: Phosphopentomutase (394 aa).

Mn(2+) is bound by residues aspartate 10, aspartate 282, histidine 287, aspartate 323, histidine 324, and histidine 335.

This sequence belongs to the phosphopentomutase family. Requires Mn(2+) as cofactor.

The protein localises to the cytoplasm. It catalyses the reaction 2-deoxy-alpha-D-ribose 1-phosphate = 2-deoxy-D-ribose 5-phosphate. The enzyme catalyses alpha-D-ribose 1-phosphate = D-ribose 5-phosphate. The protein operates within carbohydrate degradation; 2-deoxy-D-ribose 1-phosphate degradation; D-glyceraldehyde 3-phosphate and acetaldehyde from 2-deoxy-alpha-D-ribose 1-phosphate: step 1/2. Its function is as follows. Isomerase that catalyzes the conversion of deoxy-ribose 1-phosphate (dRib-1-P) and ribose 1-phosphate (Rib-1-P) to deoxy-ribose 5-phosphate (dRib-5-P) and ribose 5-phosphate (Rib-5-P), respectively. This chain is Phosphopentomutase, found in Dictyoglomus turgidum (strain DSM 6724 / Z-1310).